Consider the following 146-residue polypeptide: Snaclec coagulation factor IX/factor X-binding protein subunit B2 (146 aa).

A signal peptide spans 1-23 (MGRLIFVSFGLLVVFLSLSGTAA). Cystine bridges form between Cys25/Cys36, Cys53/Cys142, and Cys119/Cys134. A C-type lectin domain is found at 32–143 (YEGHCYKPFN…CRMMANFVCE (112 aa)).

This sequence belongs to the snaclec family. In terms of assembly, heterodimer of subunits A and B2; disulfide-linked. In terms of tissue distribution, expressed by the venom gland.

The protein localises to the secreted. In terms of biological role, anticoagulant protein which binds to the gamma-carboxyglutamic acid-domain regions of factors IX (F9) and factor X (F10) in the presence of calcium with a 1 to 1 stoichiometry. The protein is Snaclec coagulation factor IX/factor X-binding protein subunit B2 of Trimeresurus stejnegeri (Chinese green tree viper).